A 420-amino-acid polypeptide reads, in one-letter code: UDP-N-acetylglucosamine 1-carboxyvinyltransferase (420 aa).

Residue 22–23 (KN) coordinates phosphoenolpyruvate. Arg-92 is a UDP-N-acetyl-alpha-D-glucosamine binding site. Catalysis depends on Cys-116, which acts as the Proton donor. At Cys-116 the chain carries 2-(S-cysteinyl)pyruvic acid O-phosphothioketal. Residues 121–125 (RPVDQ), Asp-304, and Ile-326 each bind UDP-N-acetyl-alpha-D-glucosamine.

Belongs to the EPSP synthase family. MurA subfamily.

The protein resides in the cytoplasm. The catalysed reaction is phosphoenolpyruvate + UDP-N-acetyl-alpha-D-glucosamine = UDP-N-acetyl-3-O-(1-carboxyvinyl)-alpha-D-glucosamine + phosphate. It participates in cell wall biogenesis; peptidoglycan biosynthesis. Functionally, cell wall formation. Adds enolpyruvyl to UDP-N-acetylglucosamine. This chain is UDP-N-acetylglucosamine 1-carboxyvinyltransferase, found in Paraburkholderia phytofirmans (strain DSM 17436 / LMG 22146 / PsJN) (Burkholderia phytofirmans).